A 141-amino-acid chain; its full sequence is Ly6/PLAUR domain-containing protein 1 (141 aa).

A signal peptide spans 1 to 20 (MWVLGIAATFCGLFWLPGLA). Intrachain disulfides connect Cys25–Cys54, Cys28–Cys37, Cys46–Cys71, Cys77–Cys100, Cys88–Cys97, and Cys101–Cys106. Residues 25 to 108 (CYQCEEFQLN…SCCNTPLCNG (84 aa)) enclose the UPAR/Ly6 domain. Asn45 is a glycosylation site (N-linked (GlcNAc...) asparagine). Gly115 carries GPI-anchor amidated glycine lipidation. The propeptide at 116-141 (SSASAIRPELFTTVLFFNLALCLAHC) is removed in mature form.

In terms of assembly, interacts with CHRNA4 and nAChRs containing alpha-4:beta-2 (CHRNA4:CHRNB2) and alpha-7 (CHRNA7) subunits.

It localises to the cell membrane. Functionally, believed to act as a modulator of nicotinic acetylcholine receptors (nAChRs) activity. In vitro increases receptor desensitization and decreases affinity for ACh of alpha-4:beta-2-containing nAChRs. May play a role in the intracellular trafficking of alpha-4:beta-2 and alpha-7-containing nAChRs and may inhibit their expression at the cell surface. May be involved in the control of anxiety. The chain is Ly6/PLAUR domain-containing protein 1 (Lypd1) from Rattus norvegicus (Rat).